We begin with the raw amino-acid sequence, 462 residues long: Major capsid protein (462 aa).

Belongs to the NCLDV major capsid protein family. In terms of assembly, homotrimer.

It is found in the virion. In terms of biological role, major capsid protein that self assembles to form an icosahedral capsid. Represents around 50% of the total virion protein mass. The chain is Major capsid protein (MCP) from Costelytra zealandica (CzIV).